The chain runs to 274 residues: MAATMSEPRRVGFVGAGRMAEAIARGLIQAGKVEAKQVLASAPTDNNLCHFRALGCQTTHSNHEVLQNCPLVIFATKPQVLPTVLAEVAPIVTTEHIIVSVAAGISLSTMEGLLPPNTRVLRVSPNLPCVVQEGAMVMARGHHAGNDDAELLQNLLEACGQCIEVPESYVDIHTGLSGSGVAFVCTFSEALAEGAIKMGMPSGLAHRIAAQTLLGTAKMLQQEGKHPAQLRTDVLTPAGTTIHGLHALERGGFRAATMSAVEAATCRAKELSKK.

Alanine 2 carries the N-acetylalanine modification.

Belongs to the pyrroline-5-carboxylate reductase family. In terms of assembly, homodecamer; composed of 5 homodimers.

It is found in the cytoplasm. It carries out the reaction L-proline + NADP(+) = (S)-1-pyrroline-5-carboxylate + NADPH + 2 H(+). It catalyses the reaction L-proline + NAD(+) = (S)-1-pyrroline-5-carboxylate + NADH + 2 H(+). It functions in the pathway amino-acid biosynthesis; L-proline biosynthesis; L-proline from L-glutamate 5-semialdehyde: step 1/1. Functionally, oxidoreductase that catalyzes the last step in proline biosynthesis, which corresponds to the reduction of pyrroline-5-carboxylate (P5C) to L-proline using NAD(P)H. Proline is synthesized from either glutamate or ornithine; both are converted to P5C, and then to proline via pyrroline-5-carboxylate reductases (PYCRs). PYCR3 is exclusively linked to the biosynthesis of proline from ornithine. The sequence is that of Pyrroline-5-carboxylate reductase 3 from Mus musculus (Mouse).